The following is a 194-amino-acid chain: dTTP/UTP pyrophosphatase (194 aa).

Asp73 (proton acceptor) is an active-site residue.

It belongs to the Maf family. YhdE subfamily. A divalent metal cation is required as a cofactor.

The protein resides in the cytoplasm. It catalyses the reaction dTTP + H2O = dTMP + diphosphate + H(+). The catalysed reaction is UTP + H2O = UMP + diphosphate + H(+). Nucleoside triphosphate pyrophosphatase that hydrolyzes dTTP and UTP. May have a dual role in cell division arrest and in preventing the incorporation of modified nucleotides into cellular nucleic acids. This is dTTP/UTP pyrophosphatase from Clostridium botulinum (strain 657 / Type Ba4).